The sequence spans 276 residues: Pantothenate synthetase (276 aa).

26–33 (MGYLHEGH) is a binding site for ATP. His-33 functions as the Proton donor in the catalytic mechanism. Gln-57 contributes to the (R)-pantoate binding site. Gln-57 lines the beta-alanine pocket. Residue 142 to 145 (GLKD) coordinates ATP. Gln-148 is a binding site for (R)-pantoate. ATP-binding positions include Ile-171 and 179–182 (KSSR).

This sequence belongs to the pantothenate synthetase family. Homodimer.

The protein resides in the cytoplasm. The catalysed reaction is (R)-pantoate + beta-alanine + ATP = (R)-pantothenate + AMP + diphosphate + H(+). Its pathway is cofactor biosynthesis; (R)-pantothenate biosynthesis; (R)-pantothenate from (R)-pantoate and beta-alanine: step 1/1. In terms of biological role, catalyzes the condensation of pantoate with beta-alanine in an ATP-dependent reaction via a pantoyl-adenylate intermediate. The sequence is that of Pantothenate synthetase from Exiguobacterium sp. (strain ATCC BAA-1283 / AT1b).